A 255-amino-acid chain; its full sequence is Hydroxyacylglutathione hydrolase (255 aa).

Positions 52, 54, 56, 57, 108, 130, and 168 each coordinate Zn(2+).

This sequence belongs to the metallo-beta-lactamase superfamily. Glyoxalase II family. Monomer. It depends on Zn(2+) as a cofactor.

It carries out the reaction an S-(2-hydroxyacyl)glutathione + H2O = a 2-hydroxy carboxylate + glutathione + H(+). The protein operates within secondary metabolite metabolism; methylglyoxal degradation; (R)-lactate from methylglyoxal: step 2/2. Its function is as follows. Thiolesterase that catalyzes the hydrolysis of S-D-lactoyl-glutathione to form glutathione and D-lactic acid. The chain is Hydroxyacylglutathione hydrolase from Albidiferax ferrireducens (strain ATCC BAA-621 / DSM 15236 / T118) (Rhodoferax ferrireducens).